Consider the following 228-residue polypeptide: Demethylmenaquinone methyltransferase (228 aa).

S-adenosyl-L-methionine contacts are provided by residues Thr-62, Asp-80, 100-101 (DA), and Ser-117.

Belongs to the class I-like SAM-binding methyltransferase superfamily. MenG/UbiE family.

It catalyses the reaction a 2-demethylmenaquinol + S-adenosyl-L-methionine = a menaquinol + S-adenosyl-L-homocysteine + H(+). The protein operates within quinol/quinone metabolism; menaquinone biosynthesis; menaquinol from 1,4-dihydroxy-2-naphthoate: step 2/2. Its function is as follows. Methyltransferase required for the conversion of demethylmenaquinol (DMKH2) to menaquinol (MKH2). The protein is Demethylmenaquinone methyltransferase of Mycolicibacterium gilvum (strain PYR-GCK) (Mycobacterium gilvum (strain PYR-GCK)).